Consider the following 159-residue polypeptide: Ribosomal RNA large subunit methyltransferase H (159 aa).

S-adenosyl-L-methionine is bound by residues Leu76 and Gly108.

This sequence belongs to the RNA methyltransferase RlmH family. In terms of assembly, homodimer.

The protein resides in the cytoplasm. The enzyme catalyses pseudouridine(1915) in 23S rRNA + S-adenosyl-L-methionine = N(3)-methylpseudouridine(1915) in 23S rRNA + S-adenosyl-L-homocysteine + H(+). Functionally, specifically methylates the pseudouridine at position 1915 (m3Psi1915) in 23S rRNA. This chain is Ribosomal RNA large subunit methyltransferase H, found in Finegoldia magna (strain ATCC 29328 / DSM 20472 / WAL 2508) (Peptostreptococcus magnus).